The following is a 393-amino-acid chain: Dual-specificity RNA methyltransferase RlmN (393 aa).

The active-site Proton acceptor is the E115. Residues 121 to 365 form the Radical SAM core domain; the sequence is EEDRGTLCIS…APIRKTRGDD (245 aa). C128 and C370 are joined by a disulfide. C135, C139, and C142 together coordinate [4Fe-4S] cluster. Residues 194 to 195, S226, 248 to 250, and N327 each bind S-adenosyl-L-methionine; these read GE and SFH. The active-site S-methylcysteine intermediate is the C370.

It belongs to the radical SAM superfamily. RlmN family. It depends on [4Fe-4S] cluster as a cofactor.

It localises to the cytoplasm. The enzyme catalyses adenosine(2503) in 23S rRNA + 2 reduced [2Fe-2S]-[ferredoxin] + 2 S-adenosyl-L-methionine = 2-methyladenosine(2503) in 23S rRNA + 5'-deoxyadenosine + L-methionine + 2 oxidized [2Fe-2S]-[ferredoxin] + S-adenosyl-L-homocysteine. The catalysed reaction is adenosine(37) in tRNA + 2 reduced [2Fe-2S]-[ferredoxin] + 2 S-adenosyl-L-methionine = 2-methyladenosine(37) in tRNA + 5'-deoxyadenosine + L-methionine + 2 oxidized [2Fe-2S]-[ferredoxin] + S-adenosyl-L-homocysteine. Functionally, specifically methylates position 2 of adenine 2503 in 23S rRNA and position 2 of adenine 37 in tRNAs. m2A2503 modification seems to play a crucial role in the proofreading step occurring at the peptidyl transferase center and thus would serve to optimize ribosomal fidelity. The polypeptide is Dual-specificity RNA methyltransferase RlmN (Ruegeria pomeroyi (strain ATCC 700808 / DSM 15171 / DSS-3) (Silicibacter pomeroyi)).